A 401-amino-acid polypeptide reads, in one-letter code: Exodeoxyribonuclease 7 large subunit (401 aa).

It belongs to the XseA family. In terms of assembly, heterooligomer composed of large and small subunits.

It is found in the cytoplasm. It carries out the reaction Exonucleolytic cleavage in either 5'- to 3'- or 3'- to 5'-direction to yield nucleoside 5'-phosphates.. In terms of biological role, bidirectionally degrades single-stranded DNA into large acid-insoluble oligonucleotides, which are then degraded further into small acid-soluble oligonucleotides. The chain is Exodeoxyribonuclease 7 large subunit from Lachnoclostridium phytofermentans (strain ATCC 700394 / DSM 18823 / ISDg) (Clostridium phytofermentans).